The following is a 293-amino-acid chain: D-psicose 3-epimerase (293 aa).

Residues Tyr6 and Ala107 each contribute to the substrate site. Glu150 functions as the Proton donor/acceptor in the catalytic mechanism. Glu150 is a binding site for Mn(2+). Residues Glu156 and 183–186 (DTFH) contribute to the substrate site. Residues Asp183 and His209 each contribute to the Mn(2+) site. Residue Arg215 coordinates substrate. The active-site Proton donor/acceptor is the Glu244. Glu244 is a binding site for Mn(2+).

Belongs to the hyi family. As to quaternary structure, homotetramer. Requires Mn(2+) as cofactor. It depends on Co(2+) as a cofactor.

The enzyme catalyses D-allulose = keto-D-fructose. Functionally, involved in the biosynthesis of D-psicose. Catalyzes the reversible epimerization of D-fructose at the C3 position to yield D-psicose. The enzyme is highly specific for D-psicose and shows very low activity with D-tagatose. This is D-psicose 3-epimerase from Ruminiclostridium cellulolyticum (strain ATCC 35319 / DSM 5812 / JCM 6584 / H10) (Clostridium cellulolyticum).